The following is a 477-amino-acid chain: Argininosuccinate lyase (477 aa).

This sequence belongs to the lyase 1 family. Argininosuccinate lyase subfamily.

Its subcellular location is the cytoplasm. It carries out the reaction 2-(N(omega)-L-arginino)succinate = fumarate + L-arginine. The protein operates within amino-acid biosynthesis; L-arginine biosynthesis; L-arginine from L-ornithine and carbamoyl phosphate: step 3/3. This Corynebacterium diphtheriae (strain ATCC 700971 / NCTC 13129 / Biotype gravis) protein is Argininosuccinate lyase.